Consider the following 432-residue polypeptide: MARNVVVIGTQWGDEGKGKIVDWLTDRATGVVRFQGGHNAGHTLVVGGEKTVLHLIPSGILRENVTCYIGNGVVLSPGALLEEVDMLEQAGVDVSGRLRISETCPLILPYHIAVDGARELAKGMEKIGTTGRGIGPAYEDKVARRAIRLQDLFRPERLACKLKEVLDYHNFLLKNYYHAATVDYHQVLDDCQIKAERIRPMVADVPKLLFEASQADNNLLFEGAQGALLDIDHGTYPFVTSSNCIAGAASVGSGVGPQMLNYVLGITKAYTTRVGSGPFPTELSDATGEHLAQRGNEFGSTTGRPRRCGWFDAVAARRSIQINGVSGLCITKLDVLDGLETLRIGVGYKSKQSGEMYDALPFGADDLAAAEPVYEELPGWQERTAGIRNFDQLPQAAQNYLKRMEEVCQTPISMISTGPDRTETIVFHHPFG.

Residues Gly-13–Lys-19 and Gly-41–Thr-43 each bind GTP. Catalysis depends on Asp-14, which acts as the Proton acceptor. Mg(2+) contacts are provided by Asp-14 and Gly-41. IMP-binding positions include Asp-14 to Lys-17, Asn-39 to His-42, Thr-130, Arg-144, Gln-225, Thr-240, and Arg-304. The Proton donor role is filled by His-42. Residue Ser-300–Arg-306 coordinates substrate. GTP is bound by residues Arg-306, Lys-332–Asp-334, and Ser-416–Gly-418.

This sequence belongs to the adenylosuccinate synthetase family. As to quaternary structure, homodimer. The cofactor is Mg(2+).

The protein resides in the cytoplasm. The catalysed reaction is IMP + L-aspartate + GTP = N(6)-(1,2-dicarboxyethyl)-AMP + GDP + phosphate + 2 H(+). It functions in the pathway purine metabolism; AMP biosynthesis via de novo pathway; AMP from IMP: step 1/2. Plays an important role in the de novo pathway of purine nucleotide biosynthesis. Catalyzes the first committed step in the biosynthesis of AMP from IMP. The chain is Adenylosuccinate synthetase from Nitrosomonas europaea (strain ATCC 19718 / CIP 103999 / KCTC 2705 / NBRC 14298).